The sequence spans 434 residues: O-phosphoseryl-tRNA(Sec) selenium transferase (434 aa).

A tetramerization region spans residues 1–40; the sequence is MGLNITGLIPKHMENRGKLTLKENLKIIENILEQRKAPEN. A pyridoxal 5'-phosphate-binding site is contributed by R71. The interval 92–102 is phosphate loop (P-loop); that stretch reads GRSGNLIDPQP. Positions 93, 94, and 101 each coordinate substrate. Residue K277 is modified to N6-(pyridoxal phosphate)lysine. R306 lines the substrate pocket.

Belongs to the SepSecS family. Homotetramer. The cofactor is pyridoxal 5'-phosphate.

The catalysed reaction is O-phospho-L-seryl-tRNA(Sec) + selenophosphate + H2O = L-selenocysteinyl-tRNA(Sec) + 2 phosphate. The protein operates within aminoacyl-tRNA biosynthesis; selenocysteinyl-tRNA(Sec) biosynthesis; selenocysteinyl-tRNA(Sec) from L-seryl-tRNA(Sec) (archaeal/eukaryal route): step 2/2. Its function is as follows. Converts O-phosphoseryl-tRNA(Sec) to selenocysteinyl-tRNA(Sec) required for selenoprotein biosynthesis. The sequence is that of O-phosphoseryl-tRNA(Sec) selenium transferase (spcS) from Methanocaldococcus jannaschii (strain ATCC 43067 / DSM 2661 / JAL-1 / JCM 10045 / NBRC 100440) (Methanococcus jannaschii).